Here is a 228-residue protein sequence, read N- to C-terminus: 2-hydroxy-3-keto-5-methylthiopentenyl-1-phosphate phosphatase (228 aa).

This sequence belongs to the HAD-like hydrolase superfamily. MtnX family.

The enzyme catalyses 2-hydroxy-5-methylsulfanyl-3-oxopent-1-enyl phosphate + H2O = 1,2-dihydroxy-5-(methylsulfanyl)pent-1-en-3-one + phosphate. It functions in the pathway amino-acid biosynthesis; L-methionine biosynthesis via salvage pathway; L-methionine from S-methyl-5-thio-alpha-D-ribose 1-phosphate: step 4/6. Dephosphorylates 2-hydroxy-3-keto-5-methylthiopentenyl-1-phosphate (HK-MTPenyl-1-P) yielding 1,2-dihydroxy-3-keto-5-methylthiopentene (DHK-MTPene). The polypeptide is 2-hydroxy-3-keto-5-methylthiopentenyl-1-phosphate phosphatase (Lysinibacillus sphaericus (strain C3-41)).